A 385-amino-acid chain; its full sequence is Deoxyguanosinetriphosphate triphosphohydrolase-like protein (385 aa).

Residues 75 to 197 form the HD domain; the sequence is RLTHTLEVGQ…VDAADALAYT (123 aa).

Belongs to the dGTPase family. Type 2 subfamily.

This is Deoxyguanosinetriphosphate triphosphohydrolase-like protein from Deinococcus geothermalis (strain DSM 11300 / CIP 105573 / AG-3a).